The primary structure comprises 621 residues: DnaJ homolog subfamily C member 2 (621 aa).

Position 1 is an N-acetylmethionine (Met-1). Phosphoserine occurs at positions 47, 49, 60, and 63. Residues 88–161 form the J domain; that stretch reads DHYAVLGLGH…VKRRAFNSVD (74 aa). Positions 160-250 are ZRF1-UBD; sequence VDPTFDNSVP…RDERRWIEKQ (91 aa). Ser-183 carries the phosphoserine modification. 2 disordered regions span residues 294-315 and 426-453; these read EKKA…QRQA and KEEA…GSKH. 2 SANT domains span residues 449–511 and 549–604; these read NGSK…KLDP and TDFT…EMVK.

As to quaternary structure, component of ribosome-associated complex (RAC), a heterodimer composed of Hsp70/DnaK-type chaperone HSPA14 and Hsp40/DnaJ-type chaperone DNAJC2. Interacts (via ZRF1-UBD region) with ID1. In terms of processing, phosphorylated in M (mitotic) phase.

It is found in the nucleus. It localises to the cytoplasm. Its subcellular location is the cytosol. Its function is as follows. Acts both as a chaperone in the cytosol and as a chromatin regulator in the nucleus. When cytosolic, acts as a molecular chaperone: component of the ribosome-associated complex (RAC), a complex involved in folding or maintaining nascent polypeptides in a folding-competent state. In the RAC complex, stimulates the ATPase activity of the ribosome-associated pool of Hsp70-type chaperones HSPA14 that bind to the nascent polypeptide chain. When nuclear, mediates the switching from polycomb-repressed genes to an active state: specifically recruited at histone H2A ubiquitinated at 'Lys-119' (H2AK119ub), and promotes the displacement of the polycomb PRC1 complex from chromatin, thereby facilitating transcription activation. This chain is DnaJ homolog subfamily C member 2 (DNAJC2), found in Bos taurus (Bovine).